A 162-amino-acid chain; its full sequence is Ribosome maturation factor RimP (162 aa).

The protein belongs to the RimP family.

The protein localises to the cytoplasm. In terms of biological role, required for maturation of 30S ribosomal subunits. This chain is Ribosome maturation factor RimP, found in Ralstonia nicotianae (strain ATCC BAA-1114 / GMI1000) (Ralstonia solanacearum).